The following is a 199-amino-acid chain: Isopentenyl-diphosphate Delta-isomerase (199 aa).

Positions 40 and 47 each coordinate Mn(2+). Residues 45 to 186 (PRHLAFSCHV…PALLSPWAVE (142 aa)) form the Nudix hydrolase domain. The active site involves Cys82. Mg(2+) is bound at residue Cys82. His84 is a binding site for Mn(2+). Glu102 provides a ligand contact to Mg(2+). Glu131 and Glu133 together coordinate Mn(2+). Glu133 is a catalytic residue.

Belongs to the IPP isomerase type 1 family. Mg(2+) serves as cofactor. It depends on Mn(2+) as a cofactor.

Its subcellular location is the cytoplasm. It catalyses the reaction isopentenyl diphosphate = dimethylallyl diphosphate. It functions in the pathway isoprenoid biosynthesis; dimethylallyl diphosphate biosynthesis; dimethylallyl diphosphate from isopentenyl diphosphate: step 1/1. Its function is as follows. Catalyzes the 1,3-allylic rearrangement of the homoallylic substrate isopentenyl (IPP) to its highly electrophilic allylic isomer, dimethylallyl diphosphate (DMAPP). The protein is Isopentenyl-diphosphate Delta-isomerase of Cutibacterium acnes (strain DSM 16379 / KPA171202) (Propionibacterium acnes).